The sequence spans 563 residues: Arginine--tRNA ligase (563 aa).

The 'HIGH' region motif lies at 122–132 (PNIAKPISMGH).

The protein belongs to the class-I aminoacyl-tRNA synthetase family. In terms of assembly, monomer.

It localises to the cytoplasm. It catalyses the reaction tRNA(Arg) + L-arginine + ATP = L-arginyl-tRNA(Arg) + AMP + diphosphate. The sequence is that of Arginine--tRNA ligase from Enterococcus faecalis (strain ATCC 700802 / V583).